We begin with the raw amino-acid sequence, 306 residues long: tRNA dimethylallyltransferase (306 aa).

Position 12–19 (glycine 12–threonine 19) interacts with ATP. A substrate-binding site is contributed by threonine 14–threonine 19. 3 interaction with substrate tRNA regions span residues aspartate 37 to leucine 40, glutamine 161 to arginine 165, and arginine 242 to arginine 247.

Belongs to the IPP transferase family. As to quaternary structure, monomer. The cofactor is Mg(2+).

The catalysed reaction is adenosine(37) in tRNA + dimethylallyl diphosphate = N(6)-dimethylallyladenosine(37) in tRNA + diphosphate. Its function is as follows. Catalyzes the transfer of a dimethylallyl group onto the adenine at position 37 in tRNAs that read codons beginning with uridine, leading to the formation of N6-(dimethylallyl)adenosine (i(6)A). The protein is tRNA dimethylallyltransferase of Pseudoalteromonas translucida (strain TAC 125).